A 213-amino-acid chain; its full sequence is ATP phosphoribosyltransferase (213 aa).

This sequence belongs to the ATP phosphoribosyltransferase family. Short subfamily. In terms of assembly, heteromultimer composed of HisG and HisZ subunits.

It is found in the cytoplasm. The enzyme catalyses 1-(5-phospho-beta-D-ribosyl)-ATP + diphosphate = 5-phospho-alpha-D-ribose 1-diphosphate + ATP. It participates in amino-acid biosynthesis; L-histidine biosynthesis; L-histidine from 5-phospho-alpha-D-ribose 1-diphosphate: step 1/9. Its function is as follows. Catalyzes the condensation of ATP and 5-phosphoribose 1-diphosphate to form N'-(5'-phosphoribosyl)-ATP (PR-ATP). Has a crucial role in the pathway because the rate of histidine biosynthesis seems to be controlled primarily by regulation of HisG enzymatic activity. The protein is ATP phosphoribosyltransferase of Nitrosococcus oceani (strain ATCC 19707 / BCRC 17464 / JCM 30415 / NCIMB 11848 / C-107).